The primary structure comprises 86 residues: Cell division topological specificity factor (86 aa).

Belongs to the MinE family.

Prevents the cell division inhibition by proteins MinC and MinD at internal division sites while permitting inhibition at polar sites. This ensures cell division at the proper site by restricting the formation of a division septum at the midpoint of the long axis of the cell. This is Cell division topological specificity factor from Rhizobium johnstonii (strain DSM 114642 / LMG 32736 / 3841) (Rhizobium leguminosarum bv. viciae).